The chain runs to 413 residues: Multifunctional CCA protein (413 aa).

Residues Gly8 and Arg11 each contribute to the ATP site. CTP is bound by residues Gly8 and Arg11. Mg(2+)-binding residues include Asp21 and Asp23. ATP is bound by residues Arg91, Arg137, and Arg140. CTP is bound by residues Arg91, Arg137, and Arg140. One can recognise an HD domain in the interval 228–329 (TGLHTLMTVT…VKLFDSIDAW (102 aa)).

This sequence belongs to the tRNA nucleotidyltransferase/poly(A) polymerase family. Bacterial CCA-adding enzyme type 1 subfamily. Monomer. Can also form homodimers and oligomers. Requires Mg(2+) as cofactor. Ni(2+) serves as cofactor.

It carries out the reaction a tRNA precursor + 2 CTP + ATP = a tRNA with a 3' CCA end + 3 diphosphate. The catalysed reaction is a tRNA with a 3' CCA end + 2 CTP + ATP = a tRNA with a 3' CCACCA end + 3 diphosphate. In terms of biological role, catalyzes the addition and repair of the essential 3'-terminal CCA sequence in tRNAs without using a nucleic acid template. Adds these three nucleotides in the order of C, C, and A to the tRNA nucleotide-73, using CTP and ATP as substrates and producing inorganic pyrophosphate. tRNA 3'-terminal CCA addition is required both for tRNA processing and repair. Also involved in tRNA surveillance by mediating tandem CCA addition to generate a CCACCA at the 3' terminus of unstable tRNAs. While stable tRNAs receive only 3'-terminal CCA, unstable tRNAs are marked with CCACCA and rapidly degraded. This chain is Multifunctional CCA protein, found in Klebsiella pneumoniae subsp. pneumoniae (strain ATCC 700721 / MGH 78578).